The primary structure comprises 152 residues: 1,4-dihydroxy-2-naphthoyl-CoA hydrolase (152 aa).

D20 is an active-site residue.

This sequence belongs to the 4-hydroxybenzoyl-CoA thioesterase family. DHNA-CoA hydrolase subfamily.

The enzyme catalyses 1,4-dihydroxy-2-naphthoyl-CoA + H2O = 1,4-dihydroxy-2-naphthoate + CoA + H(+). Its pathway is cofactor biosynthesis; phylloquinone biosynthesis. It participates in quinol/quinone metabolism; 1,4-dihydroxy-2-naphthoate biosynthesis; 1,4-dihydroxy-2-naphthoate from chorismate: step 7/7. Its function is as follows. Catalyzes the hydrolysis of 1,4-dihydroxy-2-naphthoyl-CoA (DHNA-CoA) to 1,4-dihydroxy-2-naphthoate (DHNA), a reaction involved in phylloquinone (vitamin K1) biosynthesis. This is 1,4-dihydroxy-2-naphthoyl-CoA hydrolase from Parasynechococcus marenigrum (strain WH8102).